A 650-amino-acid chain; its full sequence is Laccase-like multicopper oxidase 1 (650 aa).

A signal peptide spans 1–20 (MLLSKLSILLAKWLSVAVYA). Plastocyanin-like domains are found at residues 41-151 (QVPS…IVED), 162-360 (ERIL…LRYN), and 439-595 (KPVL…VVGD). Cysteine 46 and cysteine 254 are joined by a disulfide. N-linked (GlcNAc...) asparagine glycosylation is found at asparagine 55 and asparagine 83. Histidine 87, histidine 89, histidine 133, and histidine 135 together coordinate Cu cation. 7 residues coordinate Cu cation: histidine 501, histidine 504, histidine 506, histidine 576, cysteine 577, histidine 578, and histidine 582. An N-linked (GlcNAc...) asparagine glycan is attached at asparagine 620.

It belongs to the multicopper oxidase family. As to quaternary structure, monomer. In terms of processing, N-glycosylation Asn-55 and Asn-83 is involved in folding, conformational stability and laccase activity.

It carries out the reaction 2 2',3,4-trihydroxy-trans-chalcone + O2 + 2 H(+) = 2 3',4'-dihydroxyaurone + 2 H2O. Its activity is regulated as follows. Retains almost half of its activity in presence of high salt concentrations up to 100 mM NaCl. Retains also more than 85% of its original activity in the presence of 1 mM EDTA, indicating a satisfactory resistance towards chelators, which is rare among metal-containing enzyme. The activity drops significantly in the presence of NaN(3) or SDS. Appears more active in the presence of methanol compared to ethanol, but acetone or DMSO addition severely affect remaining laccase activity. Its function is as follows. Yellow laccase-like multicopper oxidase that is able to oxidize a variety of phenolic compounds including standard laccase substrates such as 2'-azino-bis(3-ethylbenzothiazoline-6-sulphonic acid) (ABTS) and 2,6-dimethoxyphenol (2,6-DMP). The existence of an ortho-hydroxy group is crucial for oxidation since pyrogallol and catechol, which contain ortho-hydroxy groups, are readily oxidized, which is not the case for resorcinol and hydroquinone, that contain meta- and para-hydroxy groups, respectively. The same is also true for the existence of a methoxy group in an ortho-position, since 2,6-DMP, guaiacol and ferulic and caffeic acids are also rather easily oxidized compared with the corresponding unsubstituted compound. Can be used for the bioconversion of 2',3,4-trihy-droxychalcone to 3',4'-dihydroxy-aurone, a bioactive aurone recently shown to possess inhibitory activity against several isoforms of the histone deacetylase complex (HDAC). This chain is Laccase-like multicopper oxidase 1, found in Thermothelomyces thermophilus (strain ATCC 42464 / BCRC 31852 / DSM 1799) (Sporotrichum thermophile).